We begin with the raw amino-acid sequence, 282 residues long: Bis(5'-nucleosyl)-tetraphosphatase, symmetrical (282 aa).

Belongs to the Ap4A hydrolase family.

It catalyses the reaction P(1),P(4)-bis(5'-adenosyl) tetraphosphate + H2O = 2 ADP + 2 H(+). Its function is as follows. Hydrolyzes diadenosine 5',5'''-P1,P4-tetraphosphate to yield ADP. This is Bis(5'-nucleosyl)-tetraphosphatase, symmetrical from Escherichia fergusonii (strain ATCC 35469 / DSM 13698 / CCUG 18766 / IAM 14443 / JCM 21226 / LMG 7866 / NBRC 102419 / NCTC 12128 / CDC 0568-73).